The following is a 254-amino-acid chain: Type II restriction enzyme HpaI (254 aa).

It catalyses the reaction Endonucleolytic cleavage of DNA to give specific double-stranded fragments with terminal 5'-phosphates.. Its function is as follows. A P subtype restriction enzyme that recognizes the double-stranded sequence 5'-GTTAAC-3' and cleaves after T-3. This is Type II restriction enzyme HpaI (hpaIR) from Haemophilus parainfluenzae.